The primary structure comprises 274 residues: Ubiquinone biosynthesis protein COQ4 homolog, mitochondrial (274 aa).

A mitochondrion-targeting transit peptide spans 1 to 20 (MLRQTAFRSMKLNRTPGRYF). Residues 13–40 (NRTPGRYFTTAENMDTGSSQSPPDTEQK) are disordered. A compositionally biased stretch (polar residues) spans 22 to 36 (TAENMDTGSSQSPPD). Zn(2+) is bound by residues His-177, Asp-178, His-181, and Glu-193.

Belongs to the COQ4 family. As to quaternary structure, component of a multi-subunit COQ enzyme complex. Zn(2+) is required as a cofactor.

The protein localises to the mitochondrion inner membrane. The enzyme catalyses a 4-hydroxy-3-methoxy-5-(all-trans-polyprenyl)benzoate + H(+) = a 2-methoxy-6-(all-trans-polyprenyl)phenol + CO2. Its pathway is cofactor biosynthesis; ubiquinone biosynthesis. Its function is as follows. Lyase that catalyzes the C1-decarboxylation of 4-hydroxy-3-methoxy-5-(all-trans-polyprenyl)benzoic acid into 2-methoxy-6-(all-trans-polyprenyl)phenol during ubiquinone biosynthesis. The polypeptide is Ubiquinone biosynthesis protein COQ4 homolog, mitochondrial (Aedes aegypti (Yellowfever mosquito)).